The sequence spans 678 residues: Dol-P-Man:Man(7)GlcNAc(2)-PP-Dol alpha-1,6-mannosyltransferase (678 aa).

11 helical membrane-spanning segments follow: residues 1 to 21, 56 to 76, 81 to 101, 109 to 129, 133 to 153, 168 to 188, 200 to 220, 252 to 272, 279 to 299, 301 to 321, and 334 to 354; these read MDIL…FTKV, FIGP…FETL, FWAQ…AWNS, IYGV…FHFM, TRPL…AYWL, ILVF…VSLL, VALP…SFFW, FYSA…IGVA, PLVL…HKEL, FIIY…QRIW, and ALAC…LLVI.

This sequence belongs to the glycosyltransferase 22 family.

Its subcellular location is the endoplasmic reticulum membrane. The enzyme catalyses an alpha-D-Man-(1-&gt;2)-alpha-D-Man-(1-&gt;2)-alpha-D-Man-(1-&gt;3)-[alpha-D-Man-(1-&gt;2)-alpha-D-Man-(1-&gt;3)-alpha-D-Man-(1-&gt;6)]-beta-D-Man-(1-&gt;4)-beta-D-GlcNAc-(1-&gt;4)-alpha-D-GlcNAc-diphospho-di-trans,poly-cis-dolichol + a di-trans,poly-cis-dolichyl beta-D-mannosyl phosphate = an alpha-D-Man-(1-&gt;2)-alpha-D-Man-(1-&gt;2)-alpha-D-Man-(1-&gt;3)-[alpha-D-Man-(1-&gt;2)-alpha-D-Man-(1-&gt;3)-[alpha-D-Man-(1-&gt;6)]-alpha-D-Man-(1-&gt;6)]-beta-D-Man-(1-&gt;4)-beta-D-GlcNAc-(1-&gt;4)-alpha-D-GlcNAc-diphospho-di-trans,poly-cis-dolichol + a di-trans,poly-cis-dolichyl phosphate + H(+). It functions in the pathway protein modification; protein glycosylation. Its function is as follows. Mannosyltransferase that operates in the biosynthetic pathway of dolichol-linked oligosaccharides, the glycan precursors employed in protein asparagine (N)-glycosylation. The assembly of dolichol-linked oligosaccharides begins on the cytosolic side of the endoplasmic reticulum membrane and finishes in its lumen. The sequential addition of sugars to dolichol pyrophosphate produces dolichol-linked oligosaccharides containing fourteen sugars, including two GlcNAcs, nine mannoses and three glucoses. Once assembled, the oligosaccharide is transferred from the lipid to nascent proteins by oligosaccharyltransferases. In the lumen of the endoplasmic reticulum, adds the eighth mannose residue in an alpha-1,6 linkage onto Man(7)GlcNAc(2)-PP-dolichol to produce Man(8)GlcNAc(2)-PP-dolichol. This chain is Dol-P-Man:Man(7)GlcNAc(2)-PP-Dol alpha-1,6-mannosyltransferase, found in Drosophila melanogaster (Fruit fly).